A 403-amino-acid chain; its full sequence is Argininosuccinate synthase (403 aa).

ATP contacts are provided by residues 12–20 and A39; that span reads AYSGGLDTS. Y91 and S96 together coordinate L-citrulline. Residue G121 participates in ATP binding. The L-aspartate site is built by T123, N127, and D128. Residue N127 participates in L-citrulline binding. L-citrulline is bound by residues R131, S180, S189, E265, and Y277.

This sequence belongs to the argininosuccinate synthase family. Type 1 subfamily. Homotetramer.

Its subcellular location is the cytoplasm. It carries out the reaction L-citrulline + L-aspartate + ATP = 2-(N(omega)-L-arginino)succinate + AMP + diphosphate + H(+). Its pathway is amino-acid biosynthesis; L-arginine biosynthesis; L-arginine from L-ornithine and carbamoyl phosphate: step 2/3. In Vibrio vulnificus (strain CMCP6), this protein is Argininosuccinate synthase.